We begin with the raw amino-acid sequence, 287 residues long: Small ribosomal subunit biogenesis GTPase RsgA (287 aa).

Positions 61–218 constitute a CP-type G domain; that stretch reads SSELIRPTVA…LVDTPGFTTL (158 aa). Residues 110-113 and 161-169 contribute to the GTP site; these read NKED and GPSGAGKST. Zn(2+) is bound by residues C242, C247, H249, and C255.

This sequence belongs to the TRAFAC class YlqF/YawG GTPase family. RsgA subfamily. Monomer. Associates with 30S ribosomal subunit, binds 16S rRNA. Zn(2+) serves as cofactor.

The protein localises to the cytoplasm. In terms of biological role, one of several proteins that assist in the late maturation steps of the functional core of the 30S ribosomal subunit. Helps release RbfA from mature subunits. May play a role in the assembly of ribosomal proteins into the subunit. Circularly permuted GTPase that catalyzes slow GTP hydrolysis, GTPase activity is stimulated by the 30S ribosomal subunit. This Clostridium perfringens (strain ATCC 13124 / DSM 756 / JCM 1290 / NCIMB 6125 / NCTC 8237 / Type A) protein is Small ribosomal subunit biogenesis GTPase RsgA.